Here is a 175-residue protein sequence, read N- to C-terminus: ATP synthase subunit b (175 aa).

A helical membrane pass occupies residues 20–40 (LIFWTAITFVIVLLILKKIAW).

Belongs to the ATPase B chain family. As to quaternary structure, F-type ATPases have 2 components, F(1) - the catalytic core - and F(0) - the membrane proton channel. F(1) has five subunits: alpha(3), beta(3), gamma(1), delta(1), epsilon(1). F(0) has four main subunits: a(1), b(2) and c(10-14). The alpha and beta chains form an alternating ring which encloses part of the gamma chain. F(1) is attached to F(0) by a central stalk formed by the gamma and epsilon chains, while a peripheral stalk is formed by the delta and b chains.

The protein localises to the cell inner membrane. Its function is as follows. F(1)F(0) ATP synthase produces ATP from ADP in the presence of a proton or sodium gradient. F-type ATPases consist of two structural domains, F(1) containing the extramembraneous catalytic core and F(0) containing the membrane proton channel, linked together by a central stalk and a peripheral stalk. During catalysis, ATP synthesis in the catalytic domain of F(1) is coupled via a rotary mechanism of the central stalk subunits to proton translocation. In terms of biological role, component of the F(0) channel, it forms part of the peripheral stalk, linking F(1) to F(0). This Pelodictyon phaeoclathratiforme (strain DSM 5477 / BU-1) protein is ATP synthase subunit b.